The sequence spans 122 residues: Hydrogenase maturation factor HypA (122 aa).

His2 is a Ni(2+) binding site. Zn(2+)-binding residues include Cys73, Cys75, Cys95, and Cys98.

Belongs to the HypA/HybF family.

Its function is as follows. Involved in the maturation of [NiFe] hydrogenases. Required for nickel insertion into the metal center of the hydrogenase. The sequence is that of Hydrogenase maturation factor HypA from Methanothermobacter thermautotrophicus (strain ATCC 29096 / DSM 1053 / JCM 10044 / NBRC 100330 / Delta H) (Methanobacterium thermoautotrophicum).